A 72-amino-acid polypeptide reads, in one-letter code: Small proline-rich protein 2A (72 aa).

Over residues 1-11 (MSYQQQQCKQP) the composition is skewed to low complexity. The segment at 1–20 (MSYQQQQCKQPCQPPPVCPT) is disordered. Repeat copies occupy residues 21–29 (PKCPEPCPP), 30–38 (PKCPEPCPP), and 39–47 (PKCPQPCPP). Residues 21–47 (PKCPEPCPPPKCPEPCPPPKCPQPCPP) are 3 X 9 AA tandem repeats of P-K-C-P-[EQ]-P-C-P-P. The segment at 42–72 (PQPCPPQQCQQKYPPVTPSPPCQSKYPPKSK) is disordered.

The protein belongs to the cornifin (SPRR) family. Forms five pairs of intrachain disulfide bonds. In terms of tissue distribution, expressed in intestine; selectively expressed in goblet cells.

It is found in the secreted. The protein resides in the extracellular space. It localises to the cytoplasmic vesicle. The protein localises to the secretory vesicle. Its function is as follows. Gut bactericidal protein that selectively kills Gram-positive bacteria by binding to negatively charged lipids on bacterial membranes, leading to bacterial membrane permeabilization and disruption. Specifically binds lipids bearing negatively charged headgroups, such as phosphatidic acid, phosphatidylserine (PS), cardiolipin (CL), and phosphatidylinositol phosphates, but not to zwitterionic or neutral lipids. Induced by type-2 cytokines in response to helminth infection and is required to protect against helminth-induced bacterial invasion of intestinal tissue. May also be involved in the development of the cornified envelope of squamous epithelia; however, additional evidences are required to confirm this result in vivo. The chain is Small proline-rich protein 2A from Homo sapiens (Human).